Here is a 172-residue protein sequence, read N- to C-terminus: Shikimate kinase (172 aa).

Residue 14 to 19 (GAGKST) participates in ATP binding. Position 18 (serine 18) interacts with Mg(2+). Positions 36, 60, and 82 each coordinate substrate. Arginine 120 is a binding site for ATP. Residue arginine 140 participates in substrate binding. ATP is bound at residue glutamine 157.

The protein belongs to the shikimate kinase family. In terms of assembly, monomer. It depends on Mg(2+) as a cofactor.

The protein resides in the cytoplasm. The catalysed reaction is shikimate + ATP = 3-phosphoshikimate + ADP + H(+). It participates in metabolic intermediate biosynthesis; chorismate biosynthesis; chorismate from D-erythrose 4-phosphate and phosphoenolpyruvate: step 5/7. Catalyzes the specific phosphorylation of the 3-hydroxyl group of shikimic acid using ATP as a cosubstrate. The protein is Shikimate kinase of Colwellia psychrerythraea (strain 34H / ATCC BAA-681) (Vibrio psychroerythus).